The primary structure comprises 340 residues: Photosystem II assembly lipoprotein Ycf48 (340 aa).

The N-terminal stretch at methionine 1–glycine 26 is a signal peptide. Cysteine 27 carries N-palmitoyl cysteine lipidation. Residue cysteine 27 is the site of S-diacylglycerol cysteine attachment.

The protein belongs to the Ycf48 family. Part of early PSII assembly complexes which includes D1 (psbA) and PsbI; not found in mature PSII. Binds to the lumenal side of PSII complexes. Interacts with YidC.

It is found in the cellular thylakoid membrane. A factor required for optimal assembly of photosystem II (PSII), acting in the early stages of PSII assembly. Also plays a role in replacement of photodamaged D1 (psbA). Assists YidC in synthesis of chlorophyll-binding proteins. This Picosynechococcus sp. (strain ATCC 27264 / PCC 7002 / PR-6) (Agmenellum quadruplicatum) protein is Photosystem II assembly lipoprotein Ycf48.